Reading from the N-terminus, the 256-residue chain is 5'-nucleotidase SurE (256 aa).

4 residues coordinate a divalent metal cation: aspartate 8, aspartate 9, serine 40, and asparagine 92.

The protein belongs to the SurE nucleotidase family. A divalent metal cation is required as a cofactor.

Its subcellular location is the cytoplasm. It catalyses the reaction a ribonucleoside 5'-phosphate + H2O = a ribonucleoside + phosphate. In terms of biological role, nucleotidase that shows phosphatase activity on nucleoside 5'-monophosphates. This is 5'-nucleotidase SurE from Allorhizobium ampelinum (strain ATCC BAA-846 / DSM 112012 / S4) (Agrobacterium vitis (strain S4)).